Here is a 505-residue protein sequence, read N- to C-terminus: MAKQPTALIILDGFANRESEHGNAVKLANKPNFDRYYSKYPTTQIEASGLDVGLPEGQMGNSEVGHMNIGAGRVVYQSLTRINKSIEDGDFFENDVLNNAINHVKKNDSVLHVFGLLSDGGVHSHYKHLFALLDLAKKQGLEKVYVHAFLDGRDVDQKSALKYIEETEAKFKELGIGQFASVSGRYYAMDRDKRWDREEKAYNAIRNFGGTTFESAKAGVEANYDKDLTDEFVEPFIVQDQNEGVNDGDAVIFYNFRPDRAGQLSEIFTDKAFEGFKVEQINDLFYATFTKYNDNVNAEIVFEKVDLTNTIGEVAQDNGLKQLRIAETEKFPHVTYFMSGGRNEEFEGERRRLIDSPKVATYDLKPEMSAYEVKDALIEELNKGDLDLILLNFANPDMVGHSGMLEPTIKAIEAVDECLGEVVDKITEMGGHAIITADHGNSDMVLTDDDQPMTTHTTNPVPVIVTKDGVTLRETGRLGDLAPTLLDLLNVDQPEDMTGESLINH.

Residues D12 and S62 each coordinate Mn(2+). S62 serves as the catalytic Phosphoserine intermediate. Substrate-binding positions include H123, 153-154 (RD), R185, R191, 257-260 (RPDR), and K330. Mn(2+) contacts are provided by D397, H401, D438, H439, and H456.

It belongs to the BPG-independent phosphoglycerate mutase family. Monomer. The cofactor is Mn(2+).

The enzyme catalyses (2R)-2-phosphoglycerate = (2R)-3-phosphoglycerate. It functions in the pathway carbohydrate degradation; glycolysis; pyruvate from D-glyceraldehyde 3-phosphate: step 3/5. In terms of biological role, catalyzes the interconversion of 2-phosphoglycerate and 3-phosphoglycerate. This chain is 2,3-bisphosphoglycerate-independent phosphoglycerate mutase, found in Staphylococcus saprophyticus subsp. saprophyticus (strain ATCC 15305 / DSM 20229 / NCIMB 8711 / NCTC 7292 / S-41).